The sequence spans 375 residues: 4,4'-diaponeurosporenoate glycosyltransferase (375 aa).

4 helical membrane-spanning segments follow: residues 3-23 (WLSR…ALIF), 164-184 (FYEG…NVFS), 277-297 (IMTA…GLCL), and 330-350 (FSNL…KIFI).

The protein belongs to the glycosyltransferase 2 family. CrtQ subfamily.

It localises to the cell membrane. It participates in carotenoid biosynthesis; staphyloxanthin biosynthesis; staphyloxanthin from farnesyl diphosphate: step 4/5. In terms of biological role, catalyzes the glycosylation of 4,4'-diaponeurosporenoate, i.e. the esterification of glucose at the C1'' position with the carboxyl group of 4,4'-diaponeurosporenic acid, to form glycosyl-4,4'-diaponeurosporenoate. This is a step in the biosynthesis of staphyloxanthin, an orange pigment present in most staphylococci strains. The protein is 4,4'-diaponeurosporenoate glycosyltransferase (crtQ) of Staphylococcus aureus (strain Mu50 / ATCC 700699).